The sequence spans 199 residues: Protein-methionine-sulfoxide reductase heme-binding subunit MsrQ (199 aa).

6 helical membrane-spanning segments follow: residues 8 to 28 (IAWL…WLFW), 54 to 74 (FLLA…PLLI), 82 to 102 (LWCF…ELGI), 116 to 136 (PYLT…ATST), 149 to 169 (LLHN…LWSV), and 171 to 191 (IVSP…ACRY).

The protein belongs to the MsrQ family. Heterodimer of a catalytic subunit (MsrP) and a heme-binding subunit (MsrQ). Requires FMN as cofactor. It depends on heme b as a cofactor.

The protein resides in the cell inner membrane. Part of the MsrPQ system that repairs oxidized periplasmic proteins containing methionine sulfoxide residues (Met-O), using respiratory chain electrons. Thus protects these proteins from oxidative-stress damage caused by reactive species of oxygen and chlorine generated by the host defense mechanisms. MsrPQ is essential for the maintenance of envelope integrity under bleach stress, rescuing a wide series of structurally unrelated periplasmic proteins from methionine oxidation. MsrQ provides electrons for reduction to the reductase catalytic subunit MsrP, using the quinone pool of the respiratory chain. The sequence is that of Protein-methionine-sulfoxide reductase heme-binding subunit MsrQ from Klebsiella pneumoniae (strain 342).